Reading from the N-terminus, the 745-residue chain is Probable copper-transporting ATPase PacS (745 aa).

Residues Met1–Gly94 lie on the Cytoplasmic side of the membrane. In terms of domain architecture, HMA spans Gln3–Arg68. A metal cation contacts are provided by Cys14 and Cys17. The chain crosses the membrane as a helical span at residues Leu95–Pro115. The Extracellular segment spans residues His116–Trp125. A helical transmembrane segment spans residues Leu126 to Gly145. Over Ala146–Thr152 the chain is Cytoplasmic. A helical membrane pass occupies residues Arg153–Val173. Topologically, residues Ala174–Phe193 are extracellular. A helical transmembrane segment spans residues Glu194–Arg214. Residues Arg215–Arg342 are Cytoplasmic-facing. The helical transmembrane segment at Ile343–Thr365 threads the bilayer. Over Thr366–Ala372 the chain is Extracellular. The chain crosses the membrane as a helical span at residues Val373–Leu390. The Cytoplasmic portion of the chain corresponds to Ala391 to Lys543. Catalysis depends on Asp428, which acts as the 4-aspartylphosphate intermediate. A helical membrane pass occupies residues Thr544–Ile564. The Extracellular segment spans residues Lys565 to Ile687. 2 residues coordinate Mg(2+): Asp633 and Asp637. The helical transmembrane segment at Arg688–Gly707 threads the bilayer. Residues Leu708 to Pro719 are Cytoplasmic-facing. The helical transmembrane segment at Ile720–Leu738 threads the bilayer. At Arg739 to Pro745 the chain is on the extracellular side.

Belongs to the cation transport ATPase (P-type) (TC 3.A.3) family. Type IB subfamily.

The protein localises to the cell membrane. The enzyme catalyses Cu(+)(in) + ATP + H2O = Cu(+)(out) + ADP + phosphate + H(+). Its function is as follows. May play a role in the osmotic adaptation. In Synechocystis sp. (strain ATCC 27184 / PCC 6803 / Kazusa), this protein is Probable copper-transporting ATPase PacS (pacS).